The chain runs to 214 residues: ATP-dependent Clp protease proteolytic subunit 2 (214 aa).

The active-site Nucleophile is the Ser-110. His-135 is a catalytic residue.

Belongs to the peptidase S14 family. As to quaternary structure, fourteen ClpP subunits assemble into 2 heptameric rings which stack back to back to give a disk-like structure with a central cavity, resembling the structure of eukaryotic proteasomes.

It is found in the cytoplasm. The catalysed reaction is Hydrolysis of proteins to small peptides in the presence of ATP and magnesium. alpha-casein is the usual test substrate. In the absence of ATP, only oligopeptides shorter than five residues are hydrolyzed (such as succinyl-Leu-Tyr-|-NHMec, and Leu-Tyr-Leu-|-Tyr-Trp, in which cleavage of the -Tyr-|-Leu- and -Tyr-|-Trp bonds also occurs).. Cleaves peptides in various proteins in a process that requires ATP hydrolysis. Has a chymotrypsin-like activity. Plays a major role in the degradation of misfolded proteins. The protein is ATP-dependent Clp protease proteolytic subunit 2 of Mycobacterium leprae (strain TN).